Here is a 75-residue protein sequence, read N- to C-terminus: RNA-binding protein KhpA (75 aa).

Residues 29-75 enclose the KH domain; the sequence is SIILELKVAPEDMGKVIGKQGRIAKAIRTVIKAAAVKENKRVVVEII.

Belongs to the KhpA RNA-binding protein family. As to quaternary structure, forms a complex with KhpB.

The protein resides in the cytoplasm. Its function is as follows. A probable RNA chaperone. Forms a complex with KhpB which binds to cellular RNA and controls its expression. Plays a role in peptidoglycan (PG) homeostasis and cell length regulation. This chain is RNA-binding protein KhpA, found in Clostridium acetobutylicum (strain ATCC 824 / DSM 792 / JCM 1419 / IAM 19013 / LMG 5710 / NBRC 13948 / NRRL B-527 / VKM B-1787 / 2291 / W).